The primary structure comprises 433 residues: FAD-dependent monooxygenase notI (433 aa).

Positions 45 and 117 each coordinate FAD. The active site involves arginine 195. Residues aspartate 314 and alanine 327 each contribute to the FAD site.

The protein belongs to the paxM FAD-dependent monooxygenase family. It depends on FAD as a cofactor.

Its pathway is alkaloid biosynthesis. In terms of biological role, FAD-dependent monooxygenase; part of the gene cluster that mediates the biosynthesis of notoamide, a fungal indole alkaloid that belongs to a family of natural products containing a characteristic bicyclo[2.2.2]diazaoctane core. The first step of notoamide biosynthesis involves coupling of L-proline and L-tryptophan by the bimodular NRPS notE, to produce cyclo-L-tryptophan-L-proline called brevianamide F. The reverse prenyltransferase notF then acts as a deoxybrevianamide E synthase and converts brevianamide F to deoxybrevianamide E via reverse prenylation at C-2 of the indole ring leading to the bicyclo[2.2.2]diazaoctane core. Deoxybrevianamide E is further hydroxylated at C-6 of the indole ring, likely catalyzed by the cytochrome P450 monooxygenase notG, to yield 6-hydroxy-deoxybrevianamide E. 6-hydroxy-deoxybrevianamide E is a specific substrate of the prenyltransferase notC for normal prenylation at C-7 to produce 6-hydroxy-7-prenyl-deoxybrevianamide, also called notoamide S. As the proposed pivotal branching point in notoamide biosynthesis, notoamide S can be diverted to notoamide E through an oxidative pyran ring closure putatively catalyzed by either notH cytochrome P450 monooxygenase or the notD FAD-linked oxidoreductase. This step would be followed by an indole 2,3-epoxidation-initiated pinacol-like rearrangement catalyzed by the notB FAD-dependent monooxygenase leading to the formation of notoamide C and notoamide D. On the other hand notoamide S is converted to notoamide T by notH (or notD), a bifunctional oxidase that also functions as the intramolecular Diels-Alderase responsible for generation of (+)-notoamide T. To generate antipodal (-)-notoaminide T, notH' (or notD') in Aspergillus versicolor is expected to catalyze a Diels-Alder reaction leading to the opposite stereochemistry. The remaining oxidoreductase notD (or notH) likely catalyzes the oxidative pyran ring formation to yield (+)-stephacidin A. The FAD-dependent monooxygenase notI is highly similar to notB and is predicted to catalyze a similar conversion from (+)-stephacidin A to (-)-notoamide B via the 2,3-epoxidation of (+)-stephacidin A followed by a pinacol-type rearrangement. Finally, it remains unclear which enzyme could be responsible for the final hydroxylation steps leading to notoamide A and sclerotiamide. The sequence is that of FAD-dependent monooxygenase notI from Aspergillus sp. (strain MF297-2).